A 289-amino-acid chain; its full sequence is ATP phosphoribosyltransferase (289 aa).

This sequence belongs to the ATP phosphoribosyltransferase family. Long subfamily. It depends on Mg(2+) as a cofactor.

The protein resides in the cytoplasm. The enzyme catalyses 1-(5-phospho-beta-D-ribosyl)-ATP + diphosphate = 5-phospho-alpha-D-ribose 1-diphosphate + ATP. It participates in amino-acid biosynthesis; L-histidine biosynthesis; L-histidine from 5-phospho-alpha-D-ribose 1-diphosphate: step 1/9. Its activity is regulated as follows. Feedback inhibited by histidine. Catalyzes the condensation of ATP and 5-phosphoribose 1-diphosphate to form N'-(5'-phosphoribosyl)-ATP (PR-ATP). Has a crucial role in the pathway because the rate of histidine biosynthesis seems to be controlled primarily by regulation of HisG enzymatic activity. This Koribacter versatilis (strain Ellin345) protein is ATP phosphoribosyltransferase.